A 428-amino-acid polypeptide reads, in one-letter code: Trigger factor (428 aa).

One can recognise a PPIase FKBP-type domain in the interval 163-248 (GDTAVIDFEG…INEVKAKELP (86 aa)).

It belongs to the FKBP-type PPIase family. Tig subfamily.

The protein resides in the cytoplasm. It carries out the reaction [protein]-peptidylproline (omega=180) = [protein]-peptidylproline (omega=0). Its function is as follows. Involved in protein export. Acts as a chaperone by maintaining the newly synthesized protein in an open conformation. Functions as a peptidyl-prolyl cis-trans isomerase. In Oceanobacillus iheyensis (strain DSM 14371 / CIP 107618 / JCM 11309 / KCTC 3954 / HTE831), this protein is Trigger factor.